The sequence spans 259 residues: Archaerhodopsin-2 (259 aa).

The propeptide occupies 1-6; it reads MDPIAL. Pyrrolidone carboxylic acid is present on glutamine 7. Residues 7–18 lie on the Extracellular side of the membrane; it reads QAGFDLLNDGRP. The helical transmembrane segment at 19–40 threads the bilayer; that stretch reads ETLWLGIGTLLMLIGTFYFIAR. The Cytoplasmic segment spans residues 41–49; sequence GWGVTDKEA. A helical transmembrane segment spans residues 50 to 71; it reads REYYAITILVPGIASAAYLAMF. Over 72 to 90 the chain is Extracellular; sequence FGIGVTEVELASGTVLDIY. The helical transmembrane segment at 91-112 threads the bilayer; that stretch reads YARYADWLFTTPLLLLDLALLA. Residues 113–115 lie on the Cytoplasmic side of the membrane; sequence KVD. Residues 116–138 traverse the membrane as a helical segment; the sequence is RVTIGTLIGVDALMIVTGLIGAL. Residues 139–142 lie on the Extracellular side of the membrane; that stretch reads SKTP. The chain crosses the membrane as a helical span at residues 143–171; that stretch reads LARYTWWLFSTIAFLFVLYYLLTSLRSAA. Residues 172–174 are Cytoplasmic-facing; that stretch reads AKR. A helical membrane pass occupies residues 175 to 203; that stretch reads SEEVRSTFNTLTALVAVLWTAYPILWIVG. Residues 204–211 are Extracellular-facing; it reads TEGAGVVG. The helical transmembrane segment at 212–244 threads the bilayer; the sequence is LGIETLAFMVLDVTAKVGFGFVLLRSRAILGET. Lysine 227 carries the post-translational modification N6-(retinylidene)lysine. At 245–259 the chain is on the cytoplasmic side; it reads EAPEPSAGADASAAD.

This sequence belongs to the archaeal/bacterial/fungal opsin family.

The protein resides in the cell membrane. Its function is as follows. Light-driven proton pump. It may interact with bacterioruberin in the claret membrane. This Halobacterium sp. (strain aus-2) protein is Archaerhodopsin-2.